The following is a 534-amino-acid chain: Cytidylyl-2-hydroxyethylphosphonate methyltransferase (534 aa).

The B12-binding domain maps to 38–195; it reads KVLLLNPSAT…EHLNGNVSDD (158 aa). The region spanning 268-496 is the Radical SAM core domain; sequence TVGSRVGQLY…TYKQGIINVP (229 aa). Residues C282, C286, and C289 each coordinate [4Fe-4S] cluster.

The protein belongs to the radical SAM superfamily. [4Fe-4S] cluster serves as cofactor. The cofactor is methylcob(III)alamin.

The enzyme catalyses cytidine 5'-{[hydroxy(2-hydroxyethyl)phosphonoyl]phosphate} + AH2 + 2 S-adenosyl-L-methionine = cytidine 5'-({hydroxy[(S)-2-hydroxypropyl]phosphonoyl}phosphate) + 5'-deoxyadenosine + L-methionine + A + S-adenosyl-L-homocysteine + 2 H(+). Its pathway is antibiotic biosynthesis; fosfomycin biosynthesis. Its function is as follows. Involved in fosfomycin biosynthesis. Catalyzes the C-methylation of cytidylyl-2-hydroxyethylphosphonate (HEP-CMP) to form cytidylyl-2-hydroxypropylphosphonate (HPP-CMP). The C-methylation is not stereoselective and the ratio of (S)- to (R)-HPP-CMP is almost equal in vitro. The chain is Cytidylyl-2-hydroxyethylphosphonate methyltransferase from Streptomyces wedmorensis.